The sequence spans 236 residues: MEKEKLLYEGKAKKLYFTDDSEVLWVEYCDQATALNGARKEQITGKGALNNQITSLIFEKLNAEGLETHFIEKLSKTEQLNRKVSIIPLEVVLRNVVAGSFAKRFGLEEGIVLQEPIVEFYYKDDALDDPFINDEHVRFLNIATYSEIEFLKSETRKINEILKKIWAEIGLTLVDFKLEFGRLADGRIILADEISPDTSRLWDANGQHMDKDVFRRNIGDLVETYTEVLNLLENAK.

Belongs to the SAICAR synthetase family.

The catalysed reaction is 5-amino-1-(5-phospho-D-ribosyl)imidazole-4-carboxylate + L-aspartate + ATP = (2S)-2-[5-amino-1-(5-phospho-beta-D-ribosyl)imidazole-4-carboxamido]succinate + ADP + phosphate + 2 H(+). It participates in purine metabolism; IMP biosynthesis via de novo pathway; 5-amino-1-(5-phospho-D-ribosyl)imidazole-4-carboxamide from 5-amino-1-(5-phospho-D-ribosyl)imidazole-4-carboxylate: step 1/2. The sequence is that of Phosphoribosylaminoimidazole-succinocarboxamide synthase (purC) from Lactococcus lactis subsp. lactis (strain IL1403) (Streptococcus lactis).